A 384-amino-acid polypeptide reads, in one-letter code: F-box only protein 5 (384 aa).

Residues 25-67 (EVKGHKVSPRKTGALSLRSPAATNVSTPLESRSKGPHNKENYQ) form a disordered region. The span at 45-54 (AATNVSTPLE) shows a compositional bias: polar residues. Positions 55–67 (SRSKGPHNKENYQ) are enriched in basic and acidic residues. Positions 187-234 (CKLMRKDMRHILARILGLLGDCDLISCTKVSRTWRKIICQDQLALQRW) constitute an F-box domain. A ZBR-type zinc finger spans residues 311–359 (SLRRCSRCSSPARFDAVMQRAVCTRISCAFEFCTLCQSAFHDSTPCRNT). Zn(2+) contacts are provided by Cys-315, Cys-318, Cys-333, Cys-338, Cys-343, Cys-346, His-351, and Cys-356.

In terms of assembly, part of a SCF (SKP1-cullin-F-box) protein ligase complex.

The protein localises to the nucleus. It localises to the cytoplasm. Its pathway is protein modification; protein ubiquitination. Functionally, during embryonic development, regulates the integrity of the genome and therefore the cell cycle progression by preventing rereplication through an APC-Cdh1-dependent mechanism. In Danio rerio (Zebrafish), this protein is F-box only protein 5.